Here is a 168-residue protein sequence, read N- to C-terminus: MSEQAIAKKAEIVKSISEQFKSATSAVVVDYLGLTVEQVTALRKELREAGVKMEVLKNTYLRRAADANGYEALDDVFKGPTAVAFSNDDPVAPARIMAKYADQFDALKIKGGIIENKVASLDTIMEMSKMPDREGLLSQLASVLQAPVRDFALVVKAVAEAKDEEPAA.

This sequence belongs to the universal ribosomal protein uL10 family. As to quaternary structure, part of the ribosomal stalk of the 50S ribosomal subunit. The N-terminus interacts with L11 and the large rRNA to form the base of the stalk. The C-terminus forms an elongated spine to which L12 dimers bind in a sequential fashion forming a multimeric L10(L12)X complex.

Its function is as follows. Forms part of the ribosomal stalk, playing a central role in the interaction of the ribosome with GTP-bound translation factors. This is Large ribosomal subunit protein uL10 from Lacticaseibacillus casei (strain BL23) (Lactobacillus casei).